We begin with the raw amino-acid sequence, 238 residues long: RNA pyrophosphohydrolase (238 aa).

The Nudix hydrolase domain maps to 6 to 149 (GFRPNVGIIL…KREVYQMALS (144 aa)). The Nudix box signature appears at 38-59 (GGIKYGETPEQAMYRELHEEVG). The tract at residues 161–238 (APLSPYGRGG…PDDTPSKDSL (78 aa)) is disordered. Over residues 171 to 181 (PHRERDGRDNR) the composition is skewed to basic and acidic residues. Polar residues predominate over residues 188 to 199 (RNDQNTRGQRQP). A compositionally biased stretch (low complexity) spans 204–217 (VTTSTVIVETVITS).

Belongs to the Nudix hydrolase family. RppH subfamily. The cofactor is a divalent metal cation.

Accelerates the degradation of transcripts by removing pyrophosphate from the 5'-end of triphosphorylated RNA, leading to a more labile monophosphorylated state that can stimulate subsequent ribonuclease cleavage. The sequence is that of RNA pyrophosphohydrolase from Ralstonia nicotianae (strain ATCC BAA-1114 / GMI1000) (Ralstonia solanacearum).